A 384-amino-acid polypeptide reads, in one-letter code: Cytochrome b (384 aa).

4 consecutive transmembrane segments (helical) span residues 33 to 53 (YGSL…FLAM), 77 to 98 (WLIR…YLHI), 113 to 133 (WNVG…GYVL), and 178 to 198 (FFAF…IHLL). Residues His83 and His97 each contribute to the heme b site. Residues His182 and His196 each coordinate heme b. His201 is an a ubiquinone binding site. Transmembrane regions (helical) follow at residues 226-246 (YKDL…ALFT), 288-308 (LGGV…PILH), 320-340 (LSQM…WIGG), and 347-367 (FIII…VLMP).

This sequence belongs to the cytochrome b family. The cytochrome bc1 complex contains 3 respiratory subunits (MT-CYB, CYC1 and UQCRFS1), 2 core proteins (UQCRC1 and UQCRC2) and probably 6 low-molecular weight proteins. Requires heme b as cofactor.

It is found in the mitochondrion inner membrane. Its function is as follows. Component of the ubiquinol-cytochrome c reductase complex (complex III or cytochrome b-c1 complex) that is part of the mitochondrial respiratory chain. The b-c1 complex mediates electron transfer from ubiquinol to cytochrome c. Contributes to the generation of a proton gradient across the mitochondrial membrane that is then used for ATP synthesis. The protein is Cytochrome b (mt-cyb) of Anoplogaster cornuta (Common fangtooth).